The chain runs to 457 residues: tRNA modification GTPase MnmE (457 aa).

Residues R25, E87, and R126 each coordinate (6S)-5-formyl-5,6,7,8-tetrahydrofolate. Positions 223-377 constitute a TrmE-type G domain; the sequence is GISTAIIGRP…IEERINNLFF (155 aa). A K(+)-binding site is contributed by N233. Residues 233-238, 252-258, and 277-280 each bind GTP; these read NVGKSS, TDIAGTT, and DTAG. S237 contacts Mg(2+). Residues T252, I254, and T257 each contribute to the K(+) site. T258 is a Mg(2+) binding site. K457 contacts (6S)-5-formyl-5,6,7,8-tetrahydrofolate.

It belongs to the TRAFAC class TrmE-Era-EngA-EngB-Septin-like GTPase superfamily. TrmE GTPase family. Homodimer. Heterotetramer of two MnmE and two MnmG subunits. It depends on K(+) as a cofactor.

It localises to the cytoplasm. Functionally, exhibits a very high intrinsic GTPase hydrolysis rate. Involved in the addition of a carboxymethylaminomethyl (cmnm) group at the wobble position (U34) of certain tRNAs, forming tRNA-cmnm(5)s(2)U34. This Streptococcus pneumoniae (strain Hungary19A-6) protein is tRNA modification GTPase MnmE.